The primary structure comprises 351 residues: Photosystem II D2 protein (351 aa).

Residues 39–59 traverse the membrane as a helical segment; that stretch reads CAFLALGGWLTGTTFVTSWYT. His116 is a chlorophyll a binding site. The helical transmembrane segment at 123-139 threads the bilayer; it reads GFMLRQFEIARLVGIRP. Pheophytin a contacts are provided by Gln128 and Asn141. A helical transmembrane segment spans residues 151–164; it reads VFVSVFLMYPLGQS. Chlorophyll a is bound at residue His196. Residues 206–226 traverse the membrane as a helical segment; that stretch reads GALLCAIHGATVENTLFEDGE. Residues His213 and Phe260 each contribute to the a plastoquinone site. His213 is a Fe cation binding site. His267 lines the Fe cation pocket. The chain crosses the membrane as a helical span at residues 277–293; that stretch reads GLWMSAVGIVGLALNLR.

This sequence belongs to the reaction center PufL/M/PsbA/D family. As to quaternary structure, PSII is composed of 1 copy each of membrane proteins PsbA, PsbB, PsbC, PsbD, PsbE, PsbF, PsbH, PsbI, PsbJ, PsbK, PsbL, PsbM, PsbT, PsbX, PsbY, PsbZ, Psb30/Ycf12, peripheral proteins PsbO, CyanoQ (PsbQ), PsbU, PsbV and a large number of cofactors. It forms dimeric complexes. The D1/D2 heterodimer binds P680, chlorophylls that are the primary electron donor of PSII, and subsequent electron acceptors. It shares a non-heme iron and each subunit binds pheophytin, quinone, additional chlorophylls, carotenoids and lipids. There is also a Cl(-1) ion associated with D1 and D2, which is required for oxygen evolution. The PSII complex binds additional chlorophylls, carotenoids and specific lipids. serves as cofactor.

It is found in the cellular thylakoid membrane. It carries out the reaction 2 a plastoquinone + 4 hnu + 2 H2O = 2 a plastoquinol + O2. Functionally, photosystem II (PSII) is a light-driven water:plastoquinone oxidoreductase that uses light energy to abstract electrons from H(2)O, generating O(2) and a proton gradient subsequently used for ATP formation. It consists of a core antenna complex that captures photons, and an electron transfer chain that converts photonic excitation into a charge separation. The D1/D2 (PsbA/PsbD) reaction center heterodimer binds P680, the primary electron donor of PSII as well as several subsequent electron acceptors. D2 is needed for assembly of a stable PSII complex. In Trichormus variabilis (strain ATCC 29413 / PCC 7937) (Anabaena variabilis), this protein is Photosystem II D2 protein.